Here is a 2443-residue protein sequence, read N- to C-terminus: Spatacsin (2443 aa).

At Ser1955 the chain carries Phosphoserine.

As to quaternary structure, interacts with AP5Z1, AP5B1, AP5S1 and ZFYVE26. Expressed in all structures of brain, with a high expression in cerebellum. Expressed in cortical projection neurons.

The protein localises to the cytoplasm. The protein resides in the cytosol. It is found in the nucleus. Its subcellular location is the cell projection. It localises to the axon. The protein localises to the dendrite. May play a role in neurite plasticity by maintaining cytoskeleton stability and regulating synaptic vesicle transport. The protein is Spatacsin (SPG11) of Homo sapiens (Human).